A 568-amino-acid chain; its full sequence is Urease subunit alpha (568 aa).

The Urease domain occupies 129-568 (GAIDSHIHFI…LPMAQRYFLF (440 aa)). Positions 134, 136, and 217 each coordinate Ni(2+). Lys217 is modified (N6-carboxylysine). Residue His219 coordinates substrate. Residues His246 and His272 each coordinate Ni(2+). Catalysis depends on His320, which acts as the Proton donor. Asp360 lines the Ni(2+) pocket.

The protein belongs to the metallo-dependent hydrolases superfamily. Urease alpha subunit family. Heterotrimer of UreA (gamma), UreB (beta) and UreC (alpha) subunits. Three heterotrimers associate to form the active enzyme. Ni cation is required as a cofactor. Post-translationally, carboxylation allows a single lysine to coordinate two nickel ions.

It localises to the cytoplasm. It carries out the reaction urea + 2 H2O + H(+) = hydrogencarbonate + 2 NH4(+). The protein operates within nitrogen metabolism; urea degradation; CO(2) and NH(3) from urea (urease route): step 1/1. In Saccharophagus degradans (strain 2-40 / ATCC 43961 / DSM 17024), this protein is Urease subunit alpha.